Consider the following 101-residue polypeptide: MSQKIRIKLKSYDHMLVDKSAEKIVKTVKTTGAVVTGPIPLPTHKKLFTVLRSPHVNKKAREQFEVMSYKRLIDIYSSSSKTIDALMKLELPSGVEVEIKV.

Belongs to the universal ribosomal protein uS10 family. In terms of assembly, part of the 30S ribosomal subunit.

Its function is as follows. Involved in the binding of tRNA to the ribosomes. This is Small ribosomal subunit protein uS10 from Flavobacterium johnsoniae (strain ATCC 17061 / DSM 2064 / JCM 8514 / BCRC 14874 / CCUG 350202 / NBRC 14942 / NCIMB 11054 / UW101) (Cytophaga johnsonae).